Consider the following 206-residue polypeptide: Probable chemoreceptor glutamine deamidase CheD 1 (206 aa).

It belongs to the CheD family.

The enzyme catalyses L-glutaminyl-[protein] + H2O = L-glutamyl-[protein] + NH4(+). In terms of biological role, probably deamidates glutamine residues to glutamate on methyl-accepting chemotaxis receptors (MCPs), playing an important role in chemotaxis. In Shewanella oneidensis (strain ATCC 700550 / JCM 31522 / CIP 106686 / LMG 19005 / NCIMB 14063 / MR-1), this protein is Probable chemoreceptor glutamine deamidase CheD 1.